The sequence spans 267 residues: Mannose-specific lectin 1 (267 aa).

Residues 1–24 (MAKSLVLSSLLLALLLAAPLASLA) form the signal peptide. 2 Bulb-type lectin domains span residues 26–136 (NNVL…APNR) and 150–260 (RNVL…SPAR). Disulfide bonds link C54/C76 and C178/C203.

As to quaternary structure, heterotetramer of 2 domain 1 and 2 domain 2 chains arranged as a dimer of domain 1/domain 2 heterodimers.

Functionally, mannose-specific lectin. Has weak agglutinating activity towards trypsin-treated erythrocytes from rabbit but not from human. This Crocus vernus (Dutch crocus) protein is Mannose-specific lectin 1.